The sequence spans 339 residues: Glycerol-3-phosphate dehydrogenase [NAD(P)+] (339 aa).

NADPH is bound by residues Ser-13, Trp-14, and Lys-108. 3 residues coordinate sn-glycerol 3-phosphate: Lys-108, Gly-139, and Ser-141. Residue Ala-143 coordinates NADPH. The sn-glycerol 3-phosphate site is built by Lys-194, Asp-247, Ser-257, Arg-258, and Asn-259. The Proton acceptor role is filled by Lys-194. Arg-258 lines the NADPH pocket. NADPH is bound by residues Val-282 and Glu-284.

The protein belongs to the NAD-dependent glycerol-3-phosphate dehydrogenase family.

It localises to the cytoplasm. The enzyme catalyses sn-glycerol 3-phosphate + NAD(+) = dihydroxyacetone phosphate + NADH + H(+). The catalysed reaction is sn-glycerol 3-phosphate + NADP(+) = dihydroxyacetone phosphate + NADPH + H(+). The protein operates within membrane lipid metabolism; glycerophospholipid metabolism. Its function is as follows. Catalyzes the reduction of the glycolytic intermediate dihydroxyacetone phosphate (DHAP) to sn-glycerol 3-phosphate (G3P), the key precursor for phospholipid synthesis. This chain is Glycerol-3-phosphate dehydrogenase [NAD(P)+], found in Streptococcus equi subsp. zooepidemicus (strain H70).